A 407-amino-acid polypeptide reads, in one-letter code: BRCA1-A complex subunit Abraxas 1 (407 aa).

An MPN domain is found at 7 to 155 (LGVLSGFVLG…THCLEHALYK (149 aa)). A Phosphoserine modification is found at S48. Positions 209-259 (LKEVHKINEMYAAVQEELKSICQKVEQSEREVEKLLMDVNQLKEVRRTQQA) form a coiled coil. Residues 344–407 (KRKALDTHDQ…DADYPRSPTF (64 aa)) are disordered. The span at 347–366 (ALDTHDQGSVKRPRLLETES) shows a compositional bias: basic and acidic residues. 4 positions are modified to phosphoserine: S384, S385, S394, and S404. Residues 388–399 (IDIEMGSPEDDA) show a composition bias toward acidic residues. Residues 404–407 (SPTF) carry the pSXXF motif motif.

This sequence belongs to the FAM175 family. Abraxas subfamily. In terms of assembly, component of the ARISC complex, at least composed of UIMC1/RAP80, ABRAXAS1, BRCC3/BRCC36, BABAM2 and BABAM1/NBA1. Component of the BRCA1-A complex, at least composed of the BRCA1, BARD1, UIMC1/RAP80, ABRAXAS1, BRCC3/BRCC36, BABAM2 and BABAM1/NBA1. In the complex, interacts directly with UIMC1/RAP80, BRCC3/BRCC36 and BABAM2. Homodimer. Interacts directly (when phosphorylated at Ser-404) with BRCA1. The phosphorylated homodimer can interact directly with two BRCA1 chains, giving rise to a heterotetramer. Binds polyubiquitin. In terms of processing, phosphorylation of Ser-404 of the pSXXF motif by ATM or ATR constitutes a specific recognition motif for the BRCT domain of BRCA1.

The protein localises to the nucleus. Involved in DNA damage response and double-strand break (DSB) repair. Component of the BRCA1-A complex, acting as a central scaffold protein that assembles the various components of the complex and mediates the recruitment of BRCA1. The BRCA1-A complex specifically recognizes 'Lys-63'-linked ubiquitinated histones H2A and H2AX at DNA lesion sites, leading to target the BRCA1-BARD1 heterodimer to sites of DNA damage at DSBs. This complex also possesses deubiquitinase activity that specifically removes 'Lys-63'-linked ubiquitin on histones H2A and H2AX. In Mus musculus (Mouse), this protein is BRCA1-A complex subunit Abraxas 1.